The primary structure comprises 479 residues: Nuclear envelope integral membrane protein 2 (479 aa).

The signal sequence occupies residues 1-23; it reads MEKLAAFILVLTLLCAYWQSAEG. An N-linked (GlcNAc...) asparagine glycan is attached at Asn-69. Transmembrane regions (helical) follow at residues 172-192, 203-223, 233-253, 276-296, and 301-321; these read LFFYTTGVSLGIIATFVFLTL, LFLVLLGAGSGLSYMGIQRVL, HWMELLAYVLISGLFSFAVCY, IVLLYYGITFPPAYFVLVAVL, and ILPLAWSLLMGICSLFYSFLA. Residue Asn-414 is glycosylated (N-linked (GlcNAc...) asparagine). Residues 414–479 are disordered; that stretch reads NSSSSDTQSH…PLDPEDQDFF (66 aa). A compositionally biased stretch (low complexity) spans 438-449; it reads NSPPVLNNLPSP. Residues 450-470 show a composition bias toward pro residues; it reads TIYPPTICPYPPVTYTPQPEP.

Belongs to the NEMP family.

The protein localises to the nucleus inner membrane. Contributes to nuclear envelope stiffness in germ cells. Involved in male and female fertility. The protein is Nuclear envelope integral membrane protein 2 of Danio rerio (Zebrafish).